A 461-amino-acid polypeptide reads, in one-letter code: Cyclic AMP-responsive element-binding protein 3-like protein 3 (461 aa).

Residues 1–322 (MNTDLAAGKM…STSKSAQTGT (322 aa)) lie on the Cytoplasmic side of the membrane. The disordered stretch occupies residues 51–120 (DQQVLPNPDS…AGCHPAQPGK (70 aa)). A compositionally biased stretch (low complexity) spans 63–85 (FLSSILGSGDSLPSSPLWSPEGS). Residue Ser173 is modified to Phosphoserine. The region spanning 243-306 (VLKKIRRKIR…LSLLEQLKKL (64 aa)) is the bZIP domain. Residues 245 to 274 (KKIRRKIRNKQSAQESRKKKKEYIDGLETR) are basic motif. A leucine-zipper region spans residues 285 to 306 (LQRKVLHLEKQNLSLLEQLKKL). A Glycyl lysine isopeptide (Lys-Gly) (interchain with G-Cter in ubiquitin) cross-link involves residue Lys294. Residues 323–343 (CVAVLLLSFALIILPSISPFG) form a helical; Signal-anchor for type II membrane protein membrane-spanning segment. Topologically, residues 344–461 (PNKTESPGDF…AGLEAAGDEL (118 aa)) are lumenal. The disordered stretch occupies residues 370–408 (RVAADAVPGSEAPGPRPEADTTREESPGSPGADWGFQDT). Ser379 carries an O-linked (GalNAc...) serine glycan. Basic and acidic residues predominate over residues 386–395 (PEADTTREES). 4 N-linked (GlcNAc...) asparagine glycosylation sites follow: Asn410, Asn413, Asn420, and Asn427. The segment at 442–461 (APGPSTGSGRAGLEAAGDEL) is disordered.

This sequence belongs to the bZIP family. ATF subfamily. In terms of assembly, binds DNA as a dimer. May form homodimers. Interacts with ATF6. Interacts with SYNV1/HRD1; this interaction leads to CREB3L3 ubiquitination and proteasomal degradation. In terms of processing, controlled by regulated intramembrane proteolysis (RIP). Following ER stress a fragment containing the cytoplasmic transcription factor domain is released by proteolysis. The cleavage seems to be performed sequentially by site-1 and site-2 proteases (PS1 and PS2). Post-translationally, N- and O-glycosylated. N-glycosylation is required for optimal proteolytic activation. O-glycosylated with core 1 or possibly core 8 glycans. Ubiquitinated at Lys-294 by SYNV1/HRD1 via 'Lys-27'-linked ubiquitin. As to expression, exclusively expressed in liver. Underexpressed in hepatocellular carcinoma tissues.

The protein resides in the endoplasmic reticulum membrane. It is found in the nucleus. Functionally, transcription factor that may act during endoplasmic reticulum stress by activating unfolded protein response target genes. Activated in response to cAMP stimulation. In vitro, binds to the cAMP response element (CRE) and box-B element. Activates transcription through box-B element. Activates transcription through CRE. May function synergistically with ATF6. In acute inflammatory response, may activate expression of acute phase response (APR) genes. May be involved in growth suppression. Regulates FGF21 transcription. Plays a crucial role in the regulation of triglyceride metabolism and is required for the maintenance of normal plasma triglyceride concentrations. The sequence is that of Cyclic AMP-responsive element-binding protein 3-like protein 3 (CREB3L3) from Homo sapiens (Human).